The primary structure comprises 245 residues: Ribonuclease 3 (245 aa).

The RNase III domain maps to 18 to 146; sequence LSEFLENLSI…FVGAIYLDSG (129 aa). A Mg(2+)-binding site is contributed by Glu59. Asp63 is a catalytic residue. The Mg(2+) site is built by Asp132 and Glu135. The active site involves Glu135. One can recognise a DRBM domain in the interval 173–242; it reads DYKSLLQEYV…AEVALKAMED (70 aa).

It belongs to the ribonuclease III family. Homodimer. It depends on Mg(2+) as a cofactor.

It is found in the cytoplasm. The enzyme catalyses Endonucleolytic cleavage to 5'-phosphomonoester.. Digests double-stranded RNA. Involved in the processing of primary rRNA transcript to yield the immediate precursors to the large and small rRNAs (23S and 16S). Processes some mRNAs, and tRNAs when they are encoded in the rRNA operon. Processes pre-crRNA and tracrRNA of type II CRISPR loci if present in the organism. This Borreliella afzelii (strain PKo) (Borrelia afzelii) protein is Ribonuclease 3.